A 255-amino-acid chain; its full sequence is Small ribosomal subunit protein uS2 (255 aa).

It belongs to the universal ribosomal protein uS2 family.

The polypeptide is Small ribosomal subunit protein uS2 (rpsB) (Streptococcus pyogenes serotype M1).